We begin with the raw amino-acid sequence, 404 residues long: S-adenosylmethionine synthase (404 aa).

H17 is an ATP binding site. D19 contacts Mg(2+). E45 is a K(+) binding site. Residues E58 and Q101 each coordinate L-methionine. Residues 101–111 are flexible loop; that stretch reads QSADINRGVDR. ATP-binding positions include 172–174, 245–246, D254, 260–261, A277, and K281; these read DAK, RF, and RK. D254 lines the L-methionine pocket. L-methionine is bound at residue K285.

This sequence belongs to the AdoMet synthase family. As to quaternary structure, homotetramer; dimer of dimers. Requires Mg(2+) as cofactor. It depends on K(+) as a cofactor.

The protein resides in the cytoplasm. It carries out the reaction L-methionine + ATP + H2O = S-adenosyl-L-methionine + phosphate + diphosphate. Its pathway is amino-acid biosynthesis; S-adenosyl-L-methionine biosynthesis; S-adenosyl-L-methionine from L-methionine: step 1/1. In terms of biological role, catalyzes the formation of S-adenosylmethionine (AdoMet) from methionine and ATP. The overall synthetic reaction is composed of two sequential steps, AdoMet formation and the subsequent tripolyphosphate hydrolysis which occurs prior to release of AdoMet from the enzyme. In Chlorobium luteolum (strain DSM 273 / BCRC 81028 / 2530) (Pelodictyon luteolum), this protein is S-adenosylmethionine synthase.